The sequence spans 72 residues: Translation initiation factor IF-1 (72 aa).

In terms of domain architecture, S1-like spans 1 to 72 (MAKEDCIEMQ…SKARIIFRAR (72 aa)).

It belongs to the IF-1 family. Component of the 30S ribosomal translation pre-initiation complex which assembles on the 30S ribosome in the order IF-2 and IF-3, IF-1 and N-formylmethionyl-tRNA(fMet); mRNA recruitment can occur at any time during PIC assembly.

It localises to the cytoplasm. Functionally, one of the essential components for the initiation of protein synthesis. Stabilizes the binding of IF-2 and IF-3 on the 30S subunit to which N-formylmethionyl-tRNA(fMet) subsequently binds. Helps modulate mRNA selection, yielding the 30S pre-initiation complex (PIC). Upon addition of the 50S ribosomal subunit IF-1, IF-2 and IF-3 are released leaving the mature 70S translation initiation complex. This Haemophilus ducreyi (strain 35000HP / ATCC 700724) protein is Translation initiation factor IF-1.